The following is a 987-amino-acid chain: AP3-complex subunit beta-A (987 aa).

A disordered region spans residues 586-662 (QDQLSDLDKQ…ISETSVSADQ (77 aa)). Over residues 603-613 (DGSEESSETGD) the composition is skewed to acidic residues. Residues 614 to 631 (ENGSSDYDSESSNGSDFS) are compositionally biased toward low complexity.

It belongs to the adaptor complexes large subunit family. As to quaternary structure, adaptor protein complex 3 (AP-3) is a heterotetramer composed of two large adaptins (delta-type subunit and beta-type subunit), a medium adaptin (mu-type subunit) and a small adaptin (sigma-type subunit).

It is found in the cytoplasm. It localises to the golgi apparatus. Its subcellular location is the cytoplasmic vesicle membrane. Functionally, part of the AP-3 complex, an adaptor-related complex which seems to be clathrin-associated. The complex is associated with the Golgi region as well as more peripheral structures. It facilitates the budding of vesicles from the Golgi membrane and may be directly involved in trafficking to the vacuole. It also function in maintaining the identity of lytic vacuoles and in regulating the transition between storage and lytic vacuoles. This chain is AP3-complex subunit beta-A (AP3BA), found in Arabidopsis thaliana (Mouse-ear cress).